A 520-amino-acid chain; its full sequence is GMP synthase [glutamine-hydrolyzing] (520 aa).

Residues 9 to 202 enclose the Glutamine amidotransferase type-1 domain; that stretch reads SVLIVDFGSQ…IHNIAGIKGD (194 aa). Cysteine 86 functions as the Nucleophile in the catalytic mechanism. Active-site residues include histidine 176 and glutamate 178. Residues 203 to 395 enclose the GMPS ATP-PPase domain; the sequence is WSMSAYRQKA…LGLPDSFIGR (193 aa). 230 to 236 lines the ATP pocket; sequence SGGVDSS.

Homodimer.

It carries out the reaction XMP + L-glutamine + ATP + H2O = GMP + L-glutamate + AMP + diphosphate + 2 H(+). The protein operates within purine metabolism; GMP biosynthesis; GMP from XMP (L-Gln route): step 1/1. Functionally, catalyzes the synthesis of GMP from XMP. The sequence is that of GMP synthase [glutamine-hydrolyzing] from Rhizobium etli (strain CIAT 652).